A 513-amino-acid chain; its full sequence is Na(+)/H(+) antiporter NhaB (513 aa).

The next 12 membrane-spanning stretches (helical) occupy residues 23–43, 52–72, 97–117, 120–140, 144–164, 202–222, 238–258, 303–323, 348–368, 391–411, 447–467, and 475–495; these read LALI…PFVA, IFTL…LLAI, LLLM…LFIF, LLLS…AAAF, FLDA…FYGI, LMMH…VGEP, FFLR…LTCL, AIIG…VGLI, TESL…AVII, LFYI…VGTI, ATPN…APLI, and VWMA…CVEF.

Belongs to the NhaB Na(+)/H(+) (TC 2.A.34) antiporter family.

The protein localises to the cell inner membrane. The catalysed reaction is 2 Na(+)(in) + 3 H(+)(out) = 2 Na(+)(out) + 3 H(+)(in). Functionally, na(+)/H(+) antiporter that extrudes sodium in exchange for external protons. The sequence is that of Na(+)/H(+) antiporter NhaB from Shigella flexneri serotype 5b (strain 8401).